The sequence spans 605 residues: MPCAMELPSTPDELAAQQADSAALKDLLKDPSRWHSIPLLNYTPLHKLKDQTLVRFRGMIQDMMDPEIYLERYEVKSADGSKRVQEGKYRDCLKIANGEVIDYNADGNVHGERRTMFVVSVPGLNDWSKEHEKLCCPQIDLASLGQSPSSAKKRTIVGEEEAMDVDVASETTFKRPCLKEIQKDSEPVGASKSSVLGSDYLINSPLPDRPSMACMVKVYEEFDTYQLNSLVDFVGFLSVDASLDAATLEIDDCENLSELQAAHPSPFLIPRLHAFGVQVLPHANPLLDKSLRQPTEICEETYPTHLAVHKDLRMLLKLCLFDDDLAAEYLLSHLISTVYSRSEMQSIGKFALNLCNLPKNCEAYATKLYQILELLLPASHYMPMTLVTLNTAAFAPKKDYETNKLVSGVLQLAPHTHLVLDETCMQQGKLEANGVHAVQHLAHLINNQELKCDFQYYQIDYQANIPVLVLSEGRSMLPSDFVLPINADSKAVELVDESLKAAHHYLQPSRLQQFRKYLTTARTSGFNVSEEHTEMIQQDFVDMRKANVKSNADDLHGLLVLSRLLGIARGKDTLDKETWQLATEFEAKRRQRIQSLPKSSAQLRN.

Ser-147 and Ser-150 each carry phosphoserine.

This sequence belongs to the MCMBP family. Interacts with the MCM complex.

The protein localises to the nucleus. Its function is as follows. Associated component of the MCM complex that acts as a regulator of DNA replication. Binds to the MCM complex during late S phase and may act by promoting the disassembly of the MCM complex from chromatin. The protein is Mini-chromosome maintenance complex-binding protein of Drosophila melanogaster (Fruit fly).